The primary structure comprises 84 residues: MTLFNSISSISNSTGLYKQSLIANVDGMTISSSGNSSSWLSGFDGCGGCGGFGGCGGGFGGCGGSNLNIINVDMNIGRRHRRCC.

It belongs to the UPF0512 family.

The protein is UPF0512 protein O of Dictyostelium discoideum (Social amoeba).